Reading from the N-terminus, the 130-residue chain is Small ribosomal subunit protein uS8 (130 aa).

Belongs to the universal ribosomal protein uS8 family. Part of the 30S ribosomal subunit.

In terms of biological role, one of the primary rRNA binding proteins, it binds directly to 16S rRNA central domain where it helps coordinate assembly of the platform of the 30S subunit. The chain is Small ribosomal subunit protein uS8 from Pyrobaculum calidifontis (strain DSM 21063 / JCM 11548 / VA1).